A 256-amino-acid chain; its full sequence is Thiazole synthase (256 aa).

The active-site Schiff-base intermediate with DXP is Lys-95. 1-deoxy-D-xylulose 5-phosphate is bound by residues Gly-156, Ala-182 to Gly-183, and Asn-204 to Thr-205.

It belongs to the ThiG family. Homotetramer. Forms heterodimers with either ThiH or ThiS.

It is found in the cytoplasm. It carries out the reaction [ThiS sulfur-carrier protein]-C-terminal-Gly-aminoethanethioate + 2-iminoacetate + 1-deoxy-D-xylulose 5-phosphate = [ThiS sulfur-carrier protein]-C-terminal Gly-Gly + 2-[(2R,5Z)-2-carboxy-4-methylthiazol-5(2H)-ylidene]ethyl phosphate + 2 H2O + H(+). It participates in cofactor biosynthesis; thiamine diphosphate biosynthesis. Its function is as follows. Catalyzes the rearrangement of 1-deoxy-D-xylulose 5-phosphate (DXP) to produce the thiazole phosphate moiety of thiamine. Sulfur is provided by the thiocarboxylate moiety of the carrier protein ThiS. In vitro, sulfur can be provided by H(2)S. In Salmonella choleraesuis (strain SC-B67), this protein is Thiazole synthase.